Here is a 112-residue protein sequence, read N- to C-terminus: MRLLSSRAARVSGPSGSLCALLALLLLTPPGPLASAGPVAAVVRELRCVCLTTTPGIHPKTVSDLQVIAAGPQCSKVEVIATLKNGREVCLDPEAPLIKKIVQKILDSGKNN.

Positions 1–36 (MRLLSSRAARVSGPSGSLCALLALLLLTPPGPLASA) are cleaved as a signal peptide. Disulfide bonds link C48–C74 and C50–C90.

The protein belongs to the intercrine alpha (chemokine CxC) family.

It localises to the secreted. Chemotactic for neutrophil granulocytes. Signals through binding and activation of its receptors (CXCR1 and CXCR2). In addition to its chemotactic and angiogenic properties, it has strong antibacterial activity against Gram-positive and Gram-negative bacteria (90-fold-higher when compared to CXCL5 and CXCL7). This chain is C-X-C motif chemokine 6 (CXCL6), found in Bos taurus (Bovine).